A 244-amino-acid polypeptide reads, in one-letter code: 3-deoxy-manno-octulosonate cytidylyltransferase (244 aa).

Belongs to the KdsB family.

The protein localises to the cytoplasm. The enzyme catalyses 3-deoxy-alpha-D-manno-oct-2-ulosonate + CTP = CMP-3-deoxy-beta-D-manno-octulosonate + diphosphate. The protein operates within nucleotide-sugar biosynthesis; CMP-3-deoxy-D-manno-octulosonate biosynthesis; CMP-3-deoxy-D-manno-octulosonate from 3-deoxy-D-manno-octulosonate and CTP: step 1/1. It functions in the pathway bacterial outer membrane biogenesis; lipopolysaccharide biosynthesis. In terms of biological role, activates KDO (a required 8-carbon sugar) for incorporation into bacterial lipopolysaccharide in Gram-negative bacteria. The sequence is that of 3-deoxy-manno-octulosonate cytidylyltransferase from Dichelobacter nodosus (strain VCS1703A).